A 217-amino-acid polypeptide reads, in one-letter code: Probable transaldolase (217 aa).

K83 serves as the catalytic Schiff-base intermediate with substrate.

This sequence belongs to the transaldolase family. Type 3B subfamily.

It is found in the cytoplasm. The enzyme catalyses D-sedoheptulose 7-phosphate + D-glyceraldehyde 3-phosphate = D-erythrose 4-phosphate + beta-D-fructose 6-phosphate. Its pathway is carbohydrate degradation; pentose phosphate pathway; D-glyceraldehyde 3-phosphate and beta-D-fructose 6-phosphate from D-ribose 5-phosphate and D-xylulose 5-phosphate (non-oxidative stage): step 2/3. Its function is as follows. Transaldolase is important for the balance of metabolites in the pentose-phosphate pathway. The protein is Probable transaldolase of Anaeromyxobacter dehalogenans (strain 2CP-C).